A 787-amino-acid polypeptide reads, in one-letter code: Dolichyl-diphosphooligosaccharide--protein glycosyltransferase subunit STT3A (787 aa).

The Cytoplasmic segment spans residues 1 to 18 (MAEPESSTAAAGGSRLRN). The helical transmembrane segment at 19-39 (ACGGVLCAFTLLLIGVLAFSI) threads the bilayer. Topologically, residues 40–125 (RLFSVIKYES…LSVETVCVFT (86 aa)) are lumenal. The DXD motif 1 motif lies at 53–55 (EFD). Asp-55 contributes to the Mn(2+) binding site. Residues 126-144 (APIFSANASWATYLLTKEA) form a helical membrane-spanning segment. Topologically, residues 145 to 146 (KG) are cytoplasmic. Residues 147 to 164 (TGAGLMAAAILAMVPSYI) traverse the membrane as a helical segment. The Lumenal portion of the chain corresponds to 165–175 (SRSVAGSYDNE). Residues Asp-173 and Glu-175 each coordinate Mn(2+). The short motif at 173 to 175 (DNE) is the DXD motif 2 element. Residues 176–195 (AVAIFALIFTFYLYVKTLNT) form a helical membrane-spanning segment. At 196–197 (GS) the chain is on the cytoplasmic side. Residues 198–212 (LFYATLNALSYFYMV) traverse the membrane as a helical segment. At 213–217 (CSWGG) the chain is on the lumenal side. The helical transmembrane segment at 218 to 234 (YTFIINLIPIHVLLCIV) threads the bilayer. Residues 235-239 (TGRYS) are Cytoplasmic-facing. A helical membrane pass occupies residues 240–265 (SRLYIAYAPLVILGTLLAALVPVVGF). The Lumenal segment spans residues 266–273 (NAVMTSEH). A helical membrane pass occupies residues 274 to 293 (FASFLVFIILHVVALVYYIK). The Cytoplasmic segment spans residues 294–306 (GLLTPRLFKVAMT). The helical transmembrane segment at 307–327 (LVITVGLAVCFAVIAILIALV) threads the bilayer. The Lumenal segment spans residues 328 to 365 (ASSPTKGWSGRSLSLLDPTYASKYIPIIASVSEHQPPT). Residues 357-360 (SVSE) carry the SVSE motif motif. The helical transmembrane segment at 366–388 (WPSYFMDINVLAFLIPAGIISCF) threads the bilayer. The Cytoplasmic segment spans residues 389–394 (LPLSDA). A helical transmembrane segment spans residues 395–411 (SSFVVLYLVTAVYFSGV). At 412 to 415 (MVRL) the chain is on the lumenal side. Arg-414 is a dolichyl diphosphooligosaccharide binding site. The helical transmembrane segment at 416–437 (MLVLAPAACILSGIALSEAFDV) threads the bilayer. At 438-525 (LTRSVKYQLS…KLLVLPMEAS (88 aa)) the chain is on the cytoplasmic side. Residues 453–475 (SPAASGDSSAESSSASTVSTNSA) show a composition bias toward low complexity. The segment at 453-507 (SPAASGDSSAESSSASTVSTNSAKNETRPEKTETAPKEKPSKKNRKKEKEVAESV) is disordered. Positions 477-504 (NETRPEKTETAPKEKPSKKNRKKEKEVA) are enriched in basic and acidic residues. The chain crosses the membrane as a helical span at residues 526–546 (VLGILLLIVLGGFYVVHCVWA). Residues 547 to 787 (AAEAYSAPSI…AAGRKKNPWQ (241 aa)) lie on the Lumenal side of the membrane. The interval 592–594 (WWD) is interacts with target acceptor peptide in protein substrate. Residues 592 to 596 (WWDYG) carry the WWDYG motif motif. Tyr-597 contributes to the dolichyl diphosphooligosaccharide binding site. N-linked (GlcNAc...) asparagine glycosylation is found at Asn-604 and Asn-611. A glycan (N-linked (GlcNAc...) (high mannose) asparagine) is linked at Asn-615. The DK motif signature appears at 659–666 (DINKFLWM). The segment covering 759–769 (RVRGKLKKLKS) has biased composition (basic residues). Residues 759–787 (RVRGKLKKLKSGSKASSTNAAGRKKNPWQ) form a disordered region.

The protein belongs to the STT3 family. As to quaternary structure, component of the oligosaccharyltransferase (OST) complex. The cofactor is Mg(2+). It depends on Mn(2+) as a cofactor.

The protein localises to the endoplasmic reticulum membrane. The enzyme catalyses a di-trans,poly-cis-dolichyl diphosphooligosaccharide + L-asparaginyl-[protein] = N(4)-(oligosaccharide-(1-&gt;4)-N-acetyl-beta-D-glucosaminyl-(1-&gt;4)-N-acetyl-beta-D-glucosaminyl)-L-asparaginyl-[protein] + a di-trans,poly-cis-dolichyl diphosphate + H(+). It participates in protein modification; protein glycosylation. Catalytic subunit of the oligosaccharyl transferase (OST) complex that catalyzes the initial transfer of a defined glycan (Glc(3)Man(9)GlcNAc(2) in eukaryotes) from the lipid carrier dolichol-pyrophosphate to an asparagine residue within an Asn-X-Ser/Thr consensus motif in nascent polypeptide chains, the first step in protein N-glycosylation. N-glycosylation occurs cotranslationally and the complex associates with the Sec61 complex at the channel-forming translocon complex that mediates protein translocation across the endoplasmic reticulum (ER). All subunits are required for a maximal enzyme activity. This subunit contains the active site and the acceptor peptide and donor lipid-linked oligosaccharide (LLO) binding pockets. This is Dolichyl-diphosphooligosaccharide--protein glycosyltransferase subunit STT3A (STT3A) from Oryza sativa subsp. japonica (Rice).